A 571-amino-acid polypeptide reads, in one-letter code: Membrane protein insertase YidC (571 aa).

Residues 4–24 (TRVFLIFAWLMVAVLLWMEWS) traverse the membrane as a helical segment. Positions 29–76 (APTPAPTTTSAPAAAQSVPGATPGSVPNAQVPGAPGQAAVQAQASATP) are disordered. Low complexity-rich tracts occupy residues 34–43 (PTTTSAPAAA) and 57–76 (AQVP…SATP). A run of 4 helical transmembrane segments spans residues 369–389 (LVGN…LVLY), 440–460 (GGCL…WVLV), 483–503 (YFIL…LTPA), and 518–538 (PLVF…YWVV).

This sequence belongs to the OXA1/ALB3/YidC family. Type 1 subfamily. In terms of assembly, interacts with the Sec translocase complex via SecD. Specifically interacts with transmembrane segments of nascent integral membrane proteins during membrane integration.

The protein resides in the cell inner membrane. Its function is as follows. Required for the insertion and/or proper folding and/or complex formation of integral membrane proteins into the membrane. Involved in integration of membrane proteins that insert both dependently and independently of the Sec translocase complex, as well as at least some lipoproteins. Aids folding of multispanning membrane proteins. In Stenotrophomonas maltophilia (strain R551-3), this protein is Membrane protein insertase YidC.